The chain runs to 545 residues: MKCSTFCFWYVCKIIFFFLSFNIQISIANPQENFLKCLSQYIPTNVTNAKLVYTQHDQFYMSILNSTVQNLRFTSDTTPKPLVITTPLNVSHIQGTILCSKKVGLQIRTRSGGHDAEGMSYISQVPFVIVDLRNMHSVKIDVHSQTAWVESGATLGEVYYWINENNENLSFPAGYCPTVGTGGHFSGGGYGALMRNYGLAADNIIDAHLVNVDGKVLDRKSMGEDLFWAIRGGGGENFGIIAAWKIRLVAVPSMSTIFSVKKNMEIHELVKLVNKWQNIAYMYEKELLLFTHFITRNITDNQGKNKTTIHSYFSSIFHGGVDSLVDLMNKSFPELGIKKTDCKQLSWIDTIIFYSGVVNYNTTNFKKEILLDRSGGRKAAFSIKLDYVKKPIPETAMVTILEKLYEEDVGVGMFVFYPYGGIMDEISESAIPFPHRAGITYEIWYIASWEKQEDNEKHINWIRNVYNFTTPYVSQNPRMAYLNYRDLDLGKTNFESPNNYTQARIWGEKYFGKNFNRLVKVKTKVDPDNFFRNEQSIPPLPLRHH.

Positions 1 to 28 (MKCSTFCFWYVCKIIFFFLSFNIQISIA) are cleaved as a signal peptide. The cysteines at positions 37 and 99 are disulfide-linked. Asn45, Asn65, Asn89, and Asn168 each carry an N-linked (GlcNAc...) asparagine glycan. The region spanning 77–251 (TTPKPLVITT…AAWKIRLVAV (175 aa)) is the FAD-binding PCMH-type domain. Positions 114–176 (HDAEGMSYIS…ENLSFPAGYC (63 aa)) form a cross-link, 6-(S-cysteinyl)-8alpha-(pros-histidyl)-FAD (His-Cys). Substrate is bound at residue His292. 4 N-linked (GlcNAc...) asparagine glycosylation sites follow: Asn297, Asn305, Asn329, and Asn361. Position 417 (Tyr417) interacts with substrate. Residue Asn467 is glycosylated (N-linked (GlcNAc...) asparagine). Tyr484 serves as the catalytic Proton acceptor. Asn499 carries an N-linked (GlcNAc...) asparagine glycan.

The protein belongs to the oxygen-dependent FAD-linked oxidoreductase family. Requires FAD as cofactor. The FAD cofactor is bound via a bicovalent 6-S-cysteinyl, 8alpha-N1-histidyl FAD linkage.

It is found in the secreted. Functionally, has no cannabidiolic acid synthase activity. In Cannabis sativa (Hemp), this protein is Cannabidiolic acid synthase-like 2 (CBDAS3).